A 285-amino-acid chain; its full sequence is 2-dehydro-3-deoxyphosphooctonate aldolase (285 aa).

Belongs to the KdsA family.

The protein resides in the cytoplasm. It carries out the reaction D-arabinose 5-phosphate + phosphoenolpyruvate + H2O = 3-deoxy-alpha-D-manno-2-octulosonate-8-phosphate + phosphate. The protein operates within carbohydrate biosynthesis; 3-deoxy-D-manno-octulosonate biosynthesis; 3-deoxy-D-manno-octulosonate from D-ribulose 5-phosphate: step 2/3. It functions in the pathway bacterial outer membrane biogenesis; lipopolysaccharide biosynthesis. The polypeptide is 2-dehydro-3-deoxyphosphooctonate aldolase (Verminephrobacter eiseniae (strain EF01-2)).